Here is a 304-residue protein sequence, read N- to C-terminus: MRLPIFLDTDPGIDDAVAIAAAIFAPELDLQLMTTVAGNVSVEKTTRNALQLLHFWNAEIPLAQGAAVPLVRAPRDAASVHGESGMAGYDFVEHNRKPLGIPALLAIRDALMRAPEPVTLVAIGPLTNIALLLSQCPECKPYIRRLVIMGGSAGRGNCTPNAEFNIAADPEAAACVFRSGIEIVMCGLDVTNQAILTPDYLSTLPQLNRTGKMLHALFSHYRSGSMQSGLRMHDLCAIAWLVRPDLFTLKPCFVAVETQGEFTSGTTVVDIDGCLGKPANVQVALDLDVKGFQQWVAEVLALAS.

His-233 is a catalytic residue.

The protein belongs to the IUNH family. RihC subfamily.

In terms of biological role, hydrolyzes both purine and pyrimidine ribonucleosides with a broad-substrate specificity. This Escherichia coli (strain SE11) protein is Non-specific ribonucleoside hydrolase RihC.